The sequence spans 215 residues: Heart- and neural crest derivatives-expressed protein 1 (215 aa).

2 disordered regions span residues 53 to 109 (APDF…RTES) and 169 to 202 (VDGG…KGRT). Residues 65–75 (AAAAAATYGPD) show a composition bias toward low complexity. Basic residues predominate over residues 92–104 (LGRRKGSGPKKER). Residues 94–146 (RRKGSGPKKERRRTESINSAFAELRECIPNVPADTKLSKIKTLRLATSYIAYL) form the bHLH domain. Threonine 107 carries the post-translational modification Phosphothreonine; by PLK4. Phosphoserine; by PLK4 is present on serine 109.

In terms of assembly, efficient DNA binding requires dimerization with another bHLH protein. Forms homodimers and heterodimers with TCF3 gene products E12 and E47, HAND2 and HEY1, HEY2 and HEYL (hairy-related transcription factors). Interacts with MDFIC. Interacts with SOX15; the interaction enhances HAND1-induced differentiation of trophoblast giant cells. Phosphorylation by PLK4 disrupts the interaction with MDFIC and leads to translocation into the nucleoplasm, allowing dimerization and transcription factor activity.

It is found in the nucleus. The protein resides in the nucleoplasm. The protein localises to the nucleolus. In terms of biological role, transcription factor that plays an essential role in both trophoblast giant cell differentiation and in cardiac morphogenesis. Binds the DNA sequence 5'-NRTCTG-3' (non-canonical E-box). Acts as a transcriptional repressor of SOX15. In the adult, could be required for ongoing expression of cardiac-specific genes. This Oryctolagus cuniculus (Rabbit) protein is Heart- and neural crest derivatives-expressed protein 1 (HAND1).